The primary structure comprises 329 residues: Replication factor C small subunit 1 (329 aa).

44–51 (GPPGTGKT) contributes to the ATP binding site.

This sequence belongs to the activator 1 small subunits family. RfcS subfamily. Heteromultimer composed of small subunits (RfcS) and large subunits (RfcL).

In terms of biological role, part of the RFC clamp loader complex which loads the PCNA sliding clamp onto DNA. This is Replication factor C small subunit 1 from Pyrobaculum arsenaticum (strain DSM 13514 / JCM 11321 / PZ6).